The sequence spans 630 residues: Pentatricopeptide repeat-containing protein At1g62670, mitochondrial (630 aa).

The transit peptide at 1-22 (MRISFAIASTAKRFVHRSLVVR) directs the protein to the mitochondrion. 16 PPR repeats span residues 44–79 (TSYD…RPFP), 80–114 (SIIE…GIPH), 115–149 (NHYT…GYEP), 150–184 (NIVT…GYQP), 185–219 (NTVT…GCQP), 220–254 (DLVT…KLEP), 255–289 (GVLI…GIRP), 290–324 (NVVT…KINP), 325–359 (DVFT…SIDP), 360–394 (SIVT…HCFP), 395–429 (DVVT…GLVG), 430–464 (NTVT…GVPP), 465–499 (NIMT…KMEP), 500–534 (TIYT…GVKP), 535–569 (DVVA…GTLP), and 570–604 (NSGC…GFAG).

Belongs to the PPR family. P subfamily.

It is found in the mitochondrion. In Arabidopsis thaliana (Mouse-ear cress), this protein is Pentatricopeptide repeat-containing protein At1g62670, mitochondrial.